A 526-amino-acid chain; its full sequence is Amino acid transporter heavy chain SLC3A2 (526 aa).

The interval 1 to 31 is disordered; the sequence is MSQDTEVDMKDVELNELEPEKQPMNAADGAA. At 1-75 the chain is on the cytoplasmic side; that stretch reads MSQDTEVDMK…AGSPGWVRTR (75 aa). Serine 2 carries the post-translational modification Phosphoserine. Threonine 5 is subject to Phosphothreonine. Basic and acidic residues predominate over residues 7 to 21; that stretch reads VDMKDVELNELEPEK. Lysine 42 participates in a covalent cross-link: Glycyl lysine isopeptide (Lys-Gly) (interchain with G-Cter in ubiquitin). The residue at position 58 (serine 58) is a Phosphoserine. Lysine 59 participates in a covalent cross-link: Glycyl lysine isopeptide (Lys-Gly) (interchain with G-Cter in SUMO2). A helical; Signal-anchor for type II membrane protein transmembrane segment spans residues 76–99; sequence WALLLLFWLGWLGMLAGAVVIIVR. The Extracellular segment spans residues 100–526; that stretch reads APRCRELPVQ…GLLLQFPFVA (427 aa). 3 N-linked (GlcNAc...) asparagine glycosylation sites follow: asparagine 166, asparagine 259, and asparagine 263. The residue at position 300 (serine 300) is a Phosphoserine. Asparagine 301 carries an N-linked (GlcNAc...) asparagine glycan. A Phosphoserine modification is found at serine 302. Residues asparagine 318, asparagine 385, and asparagine 399 are each glycosylated (N-linked (GlcNAc...) asparagine). Phosphoserine is present on serine 420. An N-linked (GlcNAc...) asparagine glycan is attached at asparagine 509.

It belongs to the SLC3A transporter family. Disulfide-linked heterodimer with a non-glycosylated light chain (SLC7A5, SLC7A6, SLC7A7, SLC7A8, SLC7A10 or SLC7A11). Interacts with TLCD3A/CT120 and ICAM1. Constitutively and specifically associates with beta-1 integrins (alpha-2/beta-1, alpha-3/beta-1, alpha-5/beta-1 and alpha-6/beta-1), but minimally with alpha-4/beta-1. Interacts with LAPTM4B; recruits SLC3A2 and SLC7A5 to lysosomes to promote leucine uptake into these organelles and is required for mTORC1 activation. Phosphorylation on Ser-300 or Ser-302 and on Ser-420 by ecto-protein kinases favors heterotypic cell-cell interactions. Post-translationally, N-glycosylated; N-glycosylation is crucial for trafficking and stability of SLC3A2 to the plasma membrane. Detected on the surface of embryonic epithelial cells in the epidermis, thymus, kidney, intestine, brain choroid plexus, and in retina. Detected in adult and embryonic brain, spleen, kidney, intestine and liver, and in adult testis (at protein level). Observed in all adult tissues tested with strongest expression in kidney, small intestine, spleen, thymus and liver. Moderate expression in brain, stomach, heart, testis, lung, skin, pancreas and skeletal muscle. In brain expressed on capillary endothelia in cerebral cortex.

Its subcellular location is the apical cell membrane. It localises to the cell membrane. The protein resides in the cell junction. It is found in the lysosome membrane. The protein localises to the melanosome. Its subcellular location is the basolateral cell membrane. Its function is as follows. Acts as a chaperone that facilitates biogenesis and trafficking of functional transporters heterodimers to the plasma membrane. Forms heterodimer with SLC7 family transporters (SLC7A5, SLC7A6, SLC7A7, SLC7A8, SLC7A10 and SLC7A11), a group of amino-acid antiporters. Heterodimers function as amino acids exchangers, the specificity of the substrate depending on the SLC7A subunit. Heterodimers SLC3A2/SLC7A6 or SLC3A2/SLC7A7 mediate the uptake of dibasic amino acids. Heterodimer SLC3A2/SLC7A11 functions as an antiporter by mediating the exchange of extracellular anionic L-cystine and intracellular L-glutamate across the cellular plasma membrane. SLC3A2/SLC7A10 translocates small neutral L- and D-amino acids across the plasma membrane. SLC3A2/SLC75 or SLC3A2/SLC7A8 translocates neutral amino acids with broad specificity, thyroid hormones and L-DOPA. SLC3A2 is essential for plasma membrane localization, stability, and the transport activity of SLC7A5 and SLC7A8. When associated with LAPTM4B, the heterodimer SLC7A5 is recruited to lysosomes to promote leucine uptake into these organelles, and thereby mediates mTORC1 activation. Modulates integrin-related signaling and is essential for integrin-dependent cell spreading, migration and tumor progression. This Mus musculus (Mouse) protein is Amino acid transporter heavy chain SLC3A2.